The chain runs to 427 residues: 3-phosphoshikimate 1-carboxyvinyltransferase (427 aa).

3-phosphoshikimate is bound by residues lysine 23, serine 24, and arginine 28. Residue lysine 23 coordinates phosphoenolpyruvate. Phosphoenolpyruvate contacts are provided by glycine 97 and arginine 125. 7 residues coordinate 3-phosphoshikimate: serine 170, serine 171, glutamine 172, serine 198, aspartate 314, asparagine 337, and lysine 341. Glutamine 172 is a phosphoenolpyruvate binding site. Aspartate 314 (proton acceptor) is an active-site residue. Phosphoenolpyruvate-binding residues include arginine 345, arginine 387, and lysine 412.

It belongs to the EPSP synthase family. In terms of assembly, monomer.

Its subcellular location is the cytoplasm. The catalysed reaction is 3-phosphoshikimate + phosphoenolpyruvate = 5-O-(1-carboxyvinyl)-3-phosphoshikimate + phosphate. It participates in metabolic intermediate biosynthesis; chorismate biosynthesis; chorismate from D-erythrose 4-phosphate and phosphoenolpyruvate: step 6/7. Its function is as follows. Catalyzes the transfer of the enolpyruvyl moiety of phosphoenolpyruvate (PEP) to the 5-hydroxyl of shikimate-3-phosphate (S3P) to produce enolpyruvyl shikimate-3-phosphate and inorganic phosphate. The protein is 3-phosphoshikimate 1-carboxyvinyltransferase of Buchnera aphidicola subsp. Baizongia pistaciae (strain Bp).